Reading from the N-terminus, the 179-residue chain is MEKIIIDESQFMRTISRISHEIIEKHQNLNDLVIVGIKRRGAEIADLIKRKINELSGQSLPSIDLDITFYRDDLEYVEPASQSPVYSGASEFISVQNKTVILIDDVLFTGRTIRAALDALVDFGRAAKVELVIFVDRGHRELPIRADYVGKNVPTSRSEKVQVRTMKFDGCYEVALISK.

Residues 100–112 carry the PRPP-binding motif; sequence VILIDDVLFTGRT.

This sequence belongs to the purine/pyrimidine phosphoribosyltransferase family. PyrR subfamily.

The catalysed reaction is UMP + diphosphate = 5-phospho-alpha-D-ribose 1-diphosphate + uracil. Functionally, regulates the transcription of the pyrimidine nucleotide (pyr) operon in response to exogenous pyrimidines. Also displays a weak uracil phosphoribosyltransferase activity which is not physiologically significant. This Mannheimia succiniciproducens (strain KCTC 0769BP / MBEL55E) protein is Bifunctional protein PyrR.